The chain runs to 142 residues: Large ribosomal subunit protein bL21 (142 aa).

The segment covering 74 to 84 (RRRQNSKRTRG) has biased composition (basic residues). Positions 74 to 142 (RRRQNSKRTR…KAAAKAESAE (69 aa)) are disordered. The span at 107–125 (KAAEKKAPKADAAEGEAAK) shows a compositional bias: basic and acidic residues. Positions 126-135 (PKKAAPKKAA) are enriched in basic residues.

This sequence belongs to the bacterial ribosomal protein bL21 family. Part of the 50S ribosomal subunit. Contacts protein L20.

Its function is as follows. This protein binds to 23S rRNA in the presence of protein L20. The polypeptide is Large ribosomal subunit protein bL21 (Brucella melitensis biotype 2 (strain ATCC 23457)).